The chain runs to 154 residues: Crossover junction endodeoxyribonuclease RuvC (154 aa).

Residues aspartate 7, glutamate 67, and aspartate 139 contribute to the active site. Mg(2+) is bound by residues aspartate 7, glutamate 67, and aspartate 139.

This sequence belongs to the RuvC family. In terms of assembly, homodimer which binds Holliday junction (HJ) DNA. The HJ becomes 2-fold symmetrical on binding to RuvC with unstacked arms; it has a different conformation from HJ DNA in complex with RuvA. In the full resolvosome a probable DNA-RuvA(4)-RuvB(12)-RuvC(2) complex forms which resolves the HJ. It depends on Mg(2+) as a cofactor.

The protein localises to the cytoplasm. It carries out the reaction Endonucleolytic cleavage at a junction such as a reciprocal single-stranded crossover between two homologous DNA duplexes (Holliday junction).. Functionally, the RuvA-RuvB-RuvC complex processes Holliday junction (HJ) DNA during genetic recombination and DNA repair. Endonuclease that resolves HJ intermediates. Cleaves cruciform DNA by making single-stranded nicks across the HJ at symmetrical positions within the homologous arms, yielding a 5'-phosphate and a 3'-hydroxyl group; requires a central core of homology in the junction. The consensus cleavage sequence is 5'-(A/T)TT(C/G)-3'. Cleavage occurs on the 3'-side of the TT dinucleotide at the point of strand exchange. HJ branch migration catalyzed by RuvA-RuvB allows RuvC to scan DNA until it finds its consensus sequence, where it cleaves and resolves the cruciform DNA. The sequence is that of Crossover junction endodeoxyribonuclease RuvC from Prochlorococcus marinus (strain NATL2A).